A 219-amino-acid chain; its full sequence is MANVSIRKYKTSDYETARFLFAEGTKEHLPAACMYTLTTPRFYFITFVAFTSVFMGTGSYVLALTSLVALLAAGWYGLYSEFHGLASRFLRKDMLDIEKSYMMSENACFWVAEIDGKVVGTVGAQPSTDADDELLLQRISVARDYRQLRIGTKLCQTVIDFARQRGFNAVCLETANIQRAATNLYERVGFKKSRVEILPSLVHQYTSFTVAYYRYNIKS.

The next 2 helical transmembrane spans lie at 44-64 (FITF…VLAL) and 66-86 (SLVA…HGLA). The N-acetyltransferase domain occupies 62 to 211 (LALTSLVALL…VHQYTSFTVA (150 aa)).

This sequence belongs to the camello family.

The protein localises to the golgi apparatus membrane. In terms of biological role, plays a role in regulation of gastrulation, possibly by controlled reduction of cell adhesion in the periblastopore region which is necessary for optimal cell motility. In Xenopus tropicalis (Western clawed frog), this protein is Probable N-acetyltransferase camello.